A 443-amino-acid chain; its full sequence is Probable lysophospholipase BODYGUARD 5 (443 aa).

Residues 1–52 (MITSSFSEKCTSVINGAPSWAVFFLFDLLDYFLCIVFRFLDEVMEEKSESCH) form the signal peptide. A lipid anchor (N-palmitoyl cysteine) is attached at Cys53. Residues 163–268 (VIFVHGFLAS…VKSVALVAPP (106 aa)) enclose the AB hydrolase-1 domain. His167 is an active-site residue. Ser242 serves as the catalytic Nucleophile. Active-site charge relay system residues include Asp387 and His415.

It is found in the cell membrane. Its subcellular location is the secreted. The protein resides in the cell wall. Involved in cuticle development and morphogenesis. The sequence is that of Probable lysophospholipase BODYGUARD 5 from Arabidopsis thaliana (Mouse-ear cress).